Here is a 622-residue protein sequence, read N- to C-terminus: Telomerase-associated protein of 75 kDa (622 aa).

As to quaternary structure, component of the telomerase holoenzyme complex, composed of the catalytic core (the catalytic subunit TERT, the telomerase RNA template component TER and TAP65/p65), which is associated with two heterotrimeric subcomplexes: (i) the replication protein A (RPA)-related subcomplex, composed of TEB1, RPA2/TEB2 and RPA3/TEB3 and (ii) the CST-like subcomplex, composed of TAP75/p75, TAP45/p45 and TAP19/p19. TEB1 and the CST-like subcomplex are tethered to the catalytic core by TAP50/p50.

Its subcellular location is the chromosome. The protein localises to the telomere. Its function is as follows. Component of a CST-like subcomplex of the holoenzyme telomerase ribonucleoprotein complex, which stimulates telomerase complementary-strand synthesis. Telomerase is an essential ribonucleoprotein enzyme that copies new telomeric repeats onto chromosome ends by repetitively synthesizing the short telomere-repeat sequence 5'-TTGGGG-3' using an RNA template component TER. The CST-like subcomplex (also named 7-4-1) binds telomeric single-stranded DNA and coordinates telomere G-strand and C-strand synthesis. This chain is Telomerase-associated protein of 75 kDa, found in Tetrahymena thermophila (strain SB210).